The sequence spans 174 residues: Large ribosomal subunit protein uL10 (174 aa).

Belongs to the universal ribosomal protein uL10 family. In terms of assembly, part of the ribosomal stalk of the 50S ribosomal subunit. The N-terminus interacts with L11 and the large rRNA to form the base of the stalk. The C-terminus forms an elongated spine to which L12 dimers bind in a sequential fashion forming a multimeric L10(L12)X complex.

Forms part of the ribosomal stalk, playing a central role in the interaction of the ribosome with GTP-bound translation factors. The chain is Large ribosomal subunit protein uL10 from Coxiella burnetii (strain CbuK_Q154) (Coxiella burnetii (strain Q154)).